A 48-amino-acid chain; its full sequence is Disintegrin leucogastin-A (48 aa).

Positions 1-47 constitute a Disintegrin domain; sequence DCASGPCCRDCKFLEEFTICNMARGDDMNDYCNGKTCDCPRNPHKWP. 4 disulfide bridges follow: Cys2/Cys11, Cys7/Cys32, Cys8/Cys37, and Cys20/Cys39. Residues 24-26 carry the Cell attachment site motif; the sequence is RGD.

It belongs to the venom metalloproteinase (M12B) family. P-II subfamily. P-IIa sub-subfamily. Monomer (disintegrin). In terms of tissue distribution, expressed by the venom gland.

The protein localises to the secreted. In terms of biological role, inhibits ADP-induced human platelet aggregation. This Echis leucogaster (Roman's saw-scaled viper) protein is Disintegrin leucogastin-A.